Reading from the N-terminus, the 587-residue chain is Ankyrin repeat and SOCS box protein 14 (587 aa).

ANK repeat units lie at residues 82–112 (IGWI…SLWE), 117–146 (NGET…NPNA), 150–179 (EGNS…DVNL), 183–212 (NERT…HPDP), 216–245 (YGFT…IFCL), 248–277 (DSSS…DANI), 281–310 (SGHL…LAAI), 313–342 (SGIS…DVNF), 355–384 (HRKS…LPNQ), 385–414 (DPVN…NVNY), and 416–449 (CRVN…DTER). Residues 521–576 (WSEIHFILTNPRSLKHLCRLKIRKCMGRLHLRCPVFMSFLPLPNRLKAYVLYKEYD) form the SOCS box domain.

It belongs to the ankyrin SOCS box (ASB) family. As to quaternary structure, interacts with MAPRE2; this interaction promotes MAPRE2 degradation.

The protein operates within protein modification; protein ubiquitination. Its function is as follows. May be a substrate-recognition component of a SCF-like ECS (Elongin-Cullin-SOCS-box protein) E3 ubiquitin-protein ligase complex which mediates the ubiquitination and subsequent proteasomal degradation of target proteins. Plays a role in the inhibition of cardiomyocyte nuclear proliferation by mediating the ubiquitination and degradation of MAPRE2. This is Ankyrin repeat and SOCS box protein 14 (ASB14) from Homo sapiens (Human).